The chain runs to 129 residues: Small ribosomal subunit protein uS11 (129 aa).

Belongs to the universal ribosomal protein uS11 family. Part of the 30S ribosomal subunit. Interacts with proteins S7 and S18. Binds to IF-3.

Located on the platform of the 30S subunit, it bridges several disparate RNA helices of the 16S rRNA. Forms part of the Shine-Dalgarno cleft in the 70S ribosome. The chain is Small ribosomal subunit protein uS11 from Pectobacterium atrosepticum (strain SCRI 1043 / ATCC BAA-672) (Erwinia carotovora subsp. atroseptica).